We begin with the raw amino-acid sequence, 522 residues long: Serine/threonine-protein kinase pak-2 (522 aa).

One can recognise a CRIB domain in the interval 16 to 29 (ISTPSNFEHRIHAG). Residues 183–204 (TTTPQLQPKSPSTPQAMRQQPK) are compositionally biased toward polar residues. Residues 183 to 208 (TTTPQLQPKSPSTPQAMRQQPKCTEG) are disordered. Residues 231–482 (LTDYKQIGEG…AKDLLRHPFF (252 aa)) enclose the Protein kinase domain. Residues 237-245 (IGEGSTGVV) and lysine 260 contribute to the ATP site. The active-site Proton acceptor is aspartate 350.

Belongs to the protein kinase superfamily. STE Ser/Thr protein kinase family. STE20 subfamily. Mg(2+) is required as a cofactor. The cofactor is Mn(2+). As to expression, expressed in pharynx, vulva and spermatheca. Unlike other p21-activated kinases, expression is not detected in neurons.

It carries out the reaction L-seryl-[protein] + ATP = O-phospho-L-seryl-[protein] + ADP + H(+). The enzyme catalyses L-threonyl-[protein] + ATP = O-phospho-L-threonyl-[protein] + ADP + H(+). In terms of biological role, serine/threonine-protein kinase which plays a redundant role with pak-1 in embryogenesis but, in contrast to pak-1, is not involved in commissural axon guidance of ventral cord motoneurons or in distal tip cell (DTC) migration. The protein is Serine/threonine-protein kinase pak-2 of Caenorhabditis elegans.